The sequence spans 202 residues: Protein TIFY 11g (202 aa).

Residues 1 to 11 are compositionally biased toward gly residues; the sequence is MDAVGAAGGGA. The segment at 1–31 is disordered; sequence MDAVGAAGGGAMLPAAARRGQPPQPPCMTTA. Residues 12–21 show a composition bias toward low complexity; it reads MLPAAARRGQ. The region spanning 101 to 136 is the Tify domain; that stretch reads ATAPTAPLTIVYGGQVLVFEHYTAEAAEKLVQRTQH. The short motif at 185–200 is the Jas element; the sequence is PIARKASLQRFLQKRK. The short motif at 187-194 is the Nuclear localization signal element; the sequence is ARKASLQR.

This sequence belongs to the TIFY/JAZ family. Ubiquitinated. Targeted for degradation by the SCF(COI1) E3 ubiquitin ligase-proteasome pathway during jasmonate signaling.

It is found in the nucleus. Functionally, repressor of jasmonate responses. This is Protein TIFY 11g from Oryza sativa subsp. japonica (Rice).